Here is a 275-residue protein sequence, read N- to C-terminus: D-apionate oxidoisomerase (275 aa).

NAD(+)-binding positions include 11–13 (GKM), Glu-32, and Asp-68. Zn(2+) is bound by residues His-113 and Glu-183.

This sequence belongs to the ApnO family. The cofactor is Zn(2+).

It carries out the reaction D-apionate + NAD(+) = 3-oxoisoapionate + NADH + H(+). It participates in carbohydrate metabolism. Functionally, involved in catabolism of D-apiose. Catalyzes the conversion of D-apionate to 3-oxo-isoapionate. The chain is D-apionate oxidoisomerase from Rhizobium rhizogenes (strain K84 / ATCC BAA-868) (Agrobacterium radiobacter).